A 69-amino-acid chain; its full sequence is Cold shock-like protein CspE (69 aa).

A CSD domain is found at 6 to 66 (GNVKWFNESK…GAKGPSAANV (61 aa)).

The protein localises to the cytoplasm. The sequence is that of Cold shock-like protein CspE (cspE) from Buchnera aphidicola subsp. Acyrthosiphon pisum (strain APS) (Acyrthosiphon pisum symbiotic bacterium).